The sequence spans 95 residues: Aspartyl/glutamyl-tRNA(Asn/Gln) amidotransferase subunit C (95 aa).

Belongs to the GatC family. Heterotrimer of A, B and C subunits.

The enzyme catalyses L-glutamyl-tRNA(Gln) + L-glutamine + ATP + H2O = L-glutaminyl-tRNA(Gln) + L-glutamate + ADP + phosphate + H(+). It carries out the reaction L-aspartyl-tRNA(Asn) + L-glutamine + ATP + H2O = L-asparaginyl-tRNA(Asn) + L-glutamate + ADP + phosphate + 2 H(+). In terms of biological role, allows the formation of correctly charged Asn-tRNA(Asn) or Gln-tRNA(Gln) through the transamidation of misacylated Asp-tRNA(Asn) or Glu-tRNA(Gln) in organisms which lack either or both of asparaginyl-tRNA or glutaminyl-tRNA synthetases. The reaction takes place in the presence of glutamine and ATP through an activated phospho-Asp-tRNA(Asn) or phospho-Glu-tRNA(Gln). This chain is Aspartyl/glutamyl-tRNA(Asn/Gln) amidotransferase subunit C, found in Chlorobaculum tepidum (strain ATCC 49652 / DSM 12025 / NBRC 103806 / TLS) (Chlorobium tepidum).